The chain runs to 229 residues: Complex I assembly factor TMEM126B, mitochondrial (229 aa).

4 helical membrane-spanning segments follow: residues 71–91, 109–129, 140–160, and 198–218; these read IRGT…ANLV, LTTL…TDAL, VLRS…ALAF, and VPLL…YAVC.

Part of the mitochondrial complex I assembly/MCIA complex that comprises at least the core subunits TMEM126B, NDUFAF1, ECSIT and ACAD9 and complement subunits such as COA1 and TMEM186. Associates with the intermediate 370 kDa subcomplex of incompletely assembled complex I. Interacts with TMEM70.

Its subcellular location is the mitochondrion membrane. As part of the MCIA complex, involved in the assembly of the mitochondrial complex I. Participates in constructing the membrane arm of complex I. The polypeptide is Complex I assembly factor TMEM126B, mitochondrial (Rattus norvegicus (Rat)).